A 253-amino-acid chain; its full sequence is Sulfate transporter CysZ (253 aa).

Transmembrane regions (helical) follow at residues 31–51 (FVIL…WWLF), 72–92 (LSYI…GYFF), 151–171 (IVLL…PVLW), and 222–242 (IPVL…AMWV).

The protein belongs to the CysZ family.

It is found in the cell inner membrane. In terms of biological role, high affinity, high specificity proton-dependent sulfate transporter, which mediates sulfate uptake. Provides the sulfur source for the cysteine synthesis pathway. This is Sulfate transporter CysZ from Escherichia fergusonii (strain ATCC 35469 / DSM 13698 / CCUG 18766 / IAM 14443 / JCM 21226 / LMG 7866 / NBRC 102419 / NCTC 12128 / CDC 0568-73).